A 453-amino-acid chain; its full sequence is Carbamoyl phosphate synthase arginine-specific small chain (453 aa).

The transit peptide at 1–28 directs the protein to the mitochondrion; that stretch reads MFARVFKAMPARAPAFTSVNASIQSRFM. The Glutamine amidotransferase type-1 domain occupies 219-406; the sequence is HVAVIDCGVK…LDSVVKYKNH (188 aa). The active-site Nucleophile is the Cys295. Active-site residues include His379 and Glu381.

It belongs to the CarA family. As to quaternary structure, heterodimer composed of 2 chains; the small (or glutamine) chain promotes the hydrolysis of glutamine to ammonia, which is used by the large (or ammonia) chain to synthesize carbamoyl phosphate.

Its subcellular location is the mitochondrion matrix. The catalysed reaction is hydrogencarbonate + L-glutamine + 2 ATP + H2O = carbamoyl phosphate + L-glutamate + 2 ADP + phosphate + 2 H(+). The enzyme catalyses L-glutamine + H2O = L-glutamate + NH4(+). Its pathway is amino-acid biosynthesis; L-arginine biosynthesis; carbamoyl phosphate from bicarbonate: step 1/1. Small subunit of the arginine-specific carbamoyl phosphate synthase (CPSase). CPSase catalyzes the formation of carbamoyl phosphate from the ammonia moiety of glutamine, carbonate, and phosphate donated by ATP, the first step of the arginine biosynthetic pathway. The small subunit (glutamine amidotransferase) binds and cleaves glutamine to supply the large subunit with the substrate ammonia. The polypeptide is Carbamoyl phosphate synthase arginine-specific small chain (cpa1) (Aspergillus niger (strain ATCC MYA-4892 / CBS 513.88 / FGSC A1513)).